Here is a 422-residue protein sequence, read N- to C-terminus: 3-phosphoshikimate 1-carboxyvinyltransferase (422 aa).

3 residues coordinate 3-phosphoshikimate: Lys-20, Ser-21, and Arg-25. Position 20 (Lys-20) interacts with phosphoenolpyruvate. Phosphoenolpyruvate-binding residues include Gly-92 and Arg-120. 3-phosphoshikimate contacts are provided by Ser-163, Ser-164, Gln-165, Ser-191, Asp-304, and Lys-331. Gln-165 serves as a coordination point for phosphoenolpyruvate. Asp-304 serves as the catalytic Proton acceptor. Residues Arg-335 and Arg-377 each coordinate phosphoenolpyruvate.

Belongs to the EPSP synthase family. As to quaternary structure, monomer.

The protein localises to the cytoplasm. It carries out the reaction 3-phosphoshikimate + phosphoenolpyruvate = 5-O-(1-carboxyvinyl)-3-phosphoshikimate + phosphate. It participates in metabolic intermediate biosynthesis; chorismate biosynthesis. Functionally, catalyzes the transfer of the enolpyruvyl moiety of phosphoenolpyruvate (PEP) to the 5-hydroxyl of shikimate-3-phosphate (S3P) to produce enolpyruvyl shikimate-3-phosphate and inorganic phosphate. The sequence is that of 3-phosphoshikimate 1-carboxyvinyltransferase from Methanocorpusculum labreanum (strain ATCC 43576 / DSM 4855 / Z).